Consider the following 313-residue polypeptide: Catalase-related peroxidase (313 aa).

H28 is a catalytic residue. Y294 is a binding site for heme.

The protein belongs to the catalase family. In terms of assembly, monomer. Requires heme as cofactor.

In terms of biological role, has an organic peroxide-dependent peroxidase activity. Exhibits strong peroxidase activity using organic hydroperoxides as cosubstrates, weak peroxidase activity using hydrogen peroxide and negligible catalase activity. May have a role in elimination of reactive oxygen species, in particular by deactivating hydroperoxides. The sequence is that of Catalase-related peroxidase from Mycolicibacterium paratuberculosis (strain ATCC BAA-968 / K-10) (Mycobacterium paratuberculosis).